Reading from the N-terminus, the 321-residue chain is AA9 family lytic polysaccharide monooxygenase D (321 aa).

Positions 1–21 are cleaved as a signal peptide; the sequence is MRSTIVATFAAGLVVASLVAA. Cu(2+) is bound at residue His22. Cystine bridges form between Cys75–Cys192 and Cys116–Cys120. N-linked (GlcNAc...) asparagine glycosylation is present at Asn78. Residue His105 coordinates Cu(2+). An N-linked (GlcNAc...) asparagine glycan is attached at Asn152. O2-binding residues include His178 and Gln187. Tyr189 is a binding site for Cu(2+). An N-linked (GlcNAc...) asparagine glycan is attached at Asn266.

The protein belongs to the polysaccharide monooxygenase AA9 family. Cu(2+) is required as a cofactor.

It is found in the secreted. The catalysed reaction is [(1-&gt;4)-beta-D-glucosyl]n+m + reduced acceptor + O2 = 4-dehydro-beta-D-glucosyl-[(1-&gt;4)-beta-D-glucosyl]n-1 + [(1-&gt;4)-beta-D-glucosyl]m + acceptor + H2O.. Functionally, lytic polysaccharide monooxygenase (LPMO) that depolymerizes crystalline and amorphous polysaccharides via the oxidation of scissile alpha- or beta-(1-4)-glycosidic bonds, yielding C1 or C4 oxidation products. Catalysis by LPMOs requires the reduction of the active-site copper from Cu(II) to Cu(I) by a reducing agent and H(2)O(2) or O(2) as a cosubstrate. This is AA9 family lytic polysaccharide monooxygenase D from Geotrichum candidum (Oospora lactis).